Reading from the N-terminus, the 599-residue chain is UPF0313 protein UNCMA_01890 (599 aa).

The Radical SAM core domain maps to 281 to 557 (EDIPALRTVR…RALLQYKNPE (277 aa)). Positions 299, 303, and 306 each coordinate [4Fe-4S] cluster.

Belongs to the UPF0313 family. It depends on [4Fe-4S] cluster as a cofactor.

The polypeptide is UPF0313 protein UNCMA_01890 (Methanocella arvoryzae (strain DSM 22066 / NBRC 105507 / MRE50)).